An 863-amino-acid polypeptide reads, in one-letter code: MQEQYKPSEIEAKVQQHWQDKKTFEVTEDENKEKFYCLSMFPYPSGRLHMGHVRNYTIGDVVARYQRLQGKNVLQPIGWDSFGLPAENAAIKNNTAPAPWTYENIDYMKNQLKMLGFGYDWSREIATCTPEYYRWEQWFFTKLFEKGLVYKKTASVNWCPNDETVLANEQVIDGCCWRCDTTVEQKEIPQWFIKITEYADELLKDIDQLDEWPEQVKTMQRNWIGRSEGIEMTFGVVDSEETFDIYTTRPDTVMGVTYVAIAAGHPLAEKAAANNSELSDFIEECKNADTTEAAMAAMEKKGVATGLYATHPLTGKQVPIWAANFVLMNYGTGAVMSVPAHDQRDYEFATKYGLAIEGVIKPSDSDLDISEEAYTEKGVLFNSGDSFPELDGLDFQDAFDAIDAKLSSEGKGKRQVNFRLRDWGVSRQRYWGAPIPMVTLADGTVVPTPEDQLPVILPEDVVMDGIQSPIKADKEWAKTQINGQEAFRETDTFDTFMESSWYYARYCSPHADEMLDPAKANYWLPVDQYIGGIEHACMHLLYFRFFHKLLRDIGLVNSDEPAKRLLTQGMVLADAFYYNNEKGARVWVAPSDVTVQETDEKGRIQKAVDSEGHELVYTGMSKMSKSKNNGIDPQVMVDKYGADTVRLFMMFAAPPELTLEWQESSVEGAHRFIKRLWKVAHDHVAKGATAPLDVKTLDTKQKELRRELHKTIVKVGDDIERRQMFNTAIASVMELMNRLQKAPTETQQDRALMQEALSAVVRLLYPIIPHTSFSLWNDLGNEENIEDVRWPEADQSALVEDSKLIIVQVNGKLRAKITVPADATKEVVEEQGFAEEGVIKHTEGKTVRKVIYVPGKLLNIVAN.

The short motif at P42–H52 is the 'HIGH' region element. A 'KMSKS' region motif is present at residues K622–S626. K625 is a binding site for ATP.

Belongs to the class-I aminoacyl-tRNA synthetase family.

It is found in the cytoplasm. It catalyses the reaction tRNA(Leu) + L-leucine + ATP = L-leucyl-tRNA(Leu) + AMP + diphosphate. In Shewanella sediminis (strain HAW-EB3), this protein is Leucine--tRNA ligase.